Here is an 891-residue protein sequence, read N- to C-terminus: DNA mismatch repair protein MutS (891 aa).

G634–S641 is a binding site for ATP.

This sequence belongs to the DNA mismatch repair MutS family.

Functionally, this protein is involved in the repair of mismatches in DNA. It is possible that it carries out the mismatch recognition step. This protein has a weak ATPase activity. In Burkholderia mallei (strain NCTC 10247), this protein is DNA mismatch repair protein MutS.